The sequence spans 340 residues: MTEQQPIAVLGGGSFGTAIANLLAENGQAVRQWMRDPEQAEAIRSRRENPRYLKGVKVHPGVEPVTDLERTLADCQLIFVALPSSALRKVLQPHQLALTDKLLVSLTKGIEAHTFKLMSEILEEIAPQARIGVISGPNLAREIAEHELTATVVASEDDELCARVQAALHGRTFRVYASRDRFGVELGGALKNVYAIMAGLAAAMDMGENTRSMLITRALAEMTRFAVKLGANPMTFLGLAGVGDLIVTCSSPKSRNYQVGHALGEGLSLEQAVSRLGETAEGVNTLRVLKEKSDEMQVYMPLVAGLHAILFEGRTLAQVIQLLMRGEPKTDVDFIPTTGF.

4 residues coordinate NADPH: serine 14, phenylalanine 15, arginine 35, and lysine 108. Sn-glycerol 3-phosphate contacts are provided by lysine 108 and glycine 136. Residue alanine 140 participates in NADPH binding. Sn-glycerol 3-phosphate is bound by residues lysine 191, aspartate 244, serine 254, arginine 255, and asparagine 256. The active-site Proton acceptor is lysine 191. An NADPH-binding site is contributed by arginine 255. Residue glutamate 281 participates in NADPH binding.

It belongs to the NAD-dependent glycerol-3-phosphate dehydrogenase family.

It localises to the cytoplasm. The catalysed reaction is sn-glycerol 3-phosphate + NAD(+) = dihydroxyacetone phosphate + NADH + H(+). It carries out the reaction sn-glycerol 3-phosphate + NADP(+) = dihydroxyacetone phosphate + NADPH + H(+). It participates in membrane lipid metabolism; glycerophospholipid metabolism. Catalyzes the reduction of the glycolytic intermediate dihydroxyacetone phosphate (DHAP) to sn-glycerol 3-phosphate (G3P), the key precursor for phospholipid synthesis. The polypeptide is Glycerol-3-phosphate dehydrogenase [NAD(P)+] (Pseudomonas paraeruginosa (strain DSM 24068 / PA7) (Pseudomonas aeruginosa (strain PA7))).